The chain runs to 256 residues: Imidazole glycerol phosphate synthase subunit HisF (256 aa).

Active-site residues include Asp-11 and Asp-130.

Belongs to the HisA/HisF family. Heterodimer of HisH and HisF.

The protein resides in the cytoplasm. The catalysed reaction is 5-[(5-phospho-1-deoxy-D-ribulos-1-ylimino)methylamino]-1-(5-phospho-beta-D-ribosyl)imidazole-4-carboxamide + L-glutamine = D-erythro-1-(imidazol-4-yl)glycerol 3-phosphate + 5-amino-1-(5-phospho-beta-D-ribosyl)imidazole-4-carboxamide + L-glutamate + H(+). The protein operates within amino-acid biosynthesis; L-histidine biosynthesis; L-histidine from 5-phospho-alpha-D-ribose 1-diphosphate: step 5/9. Its function is as follows. IGPS catalyzes the conversion of PRFAR and glutamine to IGP, AICAR and glutamate. The HisF subunit catalyzes the cyclization activity that produces IGP and AICAR from PRFAR using the ammonia provided by the HisH subunit. The polypeptide is Imidazole glycerol phosphate synthase subunit HisF (Cupriavidus taiwanensis (strain DSM 17343 / BCRC 17206 / CCUG 44338 / CIP 107171 / LMG 19424 / R1) (Ralstonia taiwanensis (strain LMG 19424))).